Here is a 285-residue protein sequence, read N- to C-terminus: NAD kinase (285 aa).

Catalysis depends on aspartate 66, which acts as the Proton acceptor. NAD(+)-binding positions include 66 to 67, 137 to 138, arginine 148, arginine 165, aspartate 167, and 178 to 183; these read DG, ND, and TAYSMS.

Belongs to the NAD kinase family. A divalent metal cation is required as a cofactor.

The protein localises to the cytoplasm. The catalysed reaction is NAD(+) + ATP = ADP + NADP(+) + H(+). Functionally, involved in the regulation of the intracellular balance of NAD and NADP, and is a key enzyme in the biosynthesis of NADP. Catalyzes specifically the phosphorylation on 2'-hydroxyl of the adenosine moiety of NAD to yield NADP. The protein is NAD kinase of Chlorobium phaeobacteroides (strain DSM 266 / SMG 266 / 2430).